The chain runs to 442 residues: Chromosomal replication initiator protein DnaA (442 aa).

Positions 1-75 (MDAWPRCLER…GNGEVALAVG (75 aa)) are domain I, interacts with DnaA modulators. Residues 75-104 (GSRPRAPEPLPAPQAVASAPAAAPIVPFAG) are domain II. The interval 105 to 322 (NLDSHYTFAN…GALNTLVARA (218 aa)) is domain III, AAA+ region. Positions 150, 152, 153, and 154 each coordinate ATP. The tract at residues 323-442 (NFTGRSITVE…WEKLIRKLSE (120 aa)) is domain IV, binds dsDNA.

This sequence belongs to the DnaA family. In terms of assembly, oligomerizes as a right-handed, spiral filament on DNA at oriC.

The protein resides in the cytoplasm. Plays an essential role in the initiation and regulation of chromosomal replication. ATP-DnaA binds to the origin of replication (oriC) to initiate formation of the DNA replication initiation complex once per cell cycle. Binds the DnaA box (a 9 base pair repeat at the origin) and separates the double-stranded (ds)DNA. Forms a right-handed helical filament on oriC DNA; dsDNA binds to the exterior of the filament while single-stranded (ss)DNA is stabiized in the filament's interior. The ATP-DnaA-oriC complex binds and stabilizes one strand of the AT-rich DNA unwinding element (DUE), permitting loading of DNA polymerase. After initiation quickly degrades to an ADP-DnaA complex that is not apt for DNA replication. Binds acidic phospholipids. This Xanthomonas campestris pv. campestris (strain B100) protein is Chromosomal replication initiator protein DnaA.